The chain runs to 754 residues: Photosystem I P700 chlorophyll a apoprotein A1 (754 aa).

8 helical membrane passes run 72-95, 158-181, 197-221, 293-311, 351-374, 390-416, 438-460, and 535-553; these read IFSAHFGHLAVIFVWLSGMYFHGA, LYCTAIGGLVMAGLMLFAGWFHYH, MNHHLAGLLGLGSLGWAGHQIHVSL, TAHHHLAIAVLFIIAGHMY, WHAQLAINLALLGSLSIIVAHHMY, LSLFTHHVWIGGFLIVGAGAHGAIFMV, AIISHLNWVCIFLGFHSFGLYIH, and FMVHHIHAFTIHVTVLILL. Positions 577 and 586 each coordinate [4Fe-4S] cluster. 2 helical membrane passes run 593–614 and 668–690; these read HVFLGLFWMYNSLSIVIFHFSW and LSAYGIMFLAGHFVFAFSLMFLF. Residue histidine 679 participates in chlorophyll a' binding. Residues methionine 687 and tyrosine 695 each contribute to the chlorophyll a site. Tryptophan 696 contacts phylloquinone. Residues 728–748 form a helical membrane-spanning segment; the sequence is AVGVAHYLLGGIVTTWAFFLA.

It belongs to the PsaA/PsaB family. In terms of assembly, the PsaA/B heterodimer binds the P700 chlorophyll special pair and subsequent electron acceptors. PSI consists of a core antenna complex that captures photons, and an electron transfer chain that converts photonic excitation into a charge separation. The cyanobacterial PSI reaction center is composed of one copy each of PsaA,B,C,D,E,F,I,J,K,L,M and X, and forms trimeric complexes. It depends on PSI electron transfer chain: 5 chlorophyll a, 1 chlorophyll a', 2 phylloquinones and 3 4Fe-4S clusters. PSI core antenna: 90 chlorophyll a, 22 carotenoids, 3 phospholipids and 1 galactolipid. P700 is a chlorophyll a/chlorophyll a' dimer, A0 is one or more chlorophyll a, A1 is one or both phylloquinones and FX is a shared 4Fe-4S iron-sulfur center. as a cofactor.

Its subcellular location is the cellular thylakoid membrane. The catalysed reaction is reduced [plastocyanin] + hnu + oxidized [2Fe-2S]-[ferredoxin] = oxidized [plastocyanin] + reduced [2Fe-2S]-[ferredoxin]. PsaA and PsaB bind P700, the primary electron donor of photosystem I (PSI), as well as the electron acceptors A0, A1 and FX. PSI is a plastocyanin/cytochrome c6-ferredoxin oxidoreductase, converting photonic excitation into a charge separation, which transfers an electron from the donor P700 chlorophyll pair to the spectroscopically characterized acceptors A0, A1, FX, FA and FB in turn. Oxidized P700 is reduced on the lumenal side of the thylakoid membrane by plastocyanin or cytochrome c6. In Rippkaea orientalis (strain PCC 8801 / RF-1) (Cyanothece sp. (strain PCC 8801)), this protein is Photosystem I P700 chlorophyll a apoprotein A1.